Here is a 258-residue protein sequence, read N- to C-terminus: Trans-aconitate 2-methyltransferase (258 aa).

It belongs to the methyltransferase superfamily. Tam family.

The protein localises to the cytoplasm. It catalyses the reaction trans-aconitate + S-adenosyl-L-methionine = (E)-3-(methoxycarbonyl)pent-2-enedioate + S-adenosyl-L-homocysteine. In terms of biological role, catalyzes the S-adenosylmethionine monomethyl esterification of trans-aconitate. The sequence is that of Trans-aconitate 2-methyltransferase from Acidovorax ebreus (strain TPSY) (Diaphorobacter sp. (strain TPSY)).